Reading from the N-terminus, the 285-residue chain is 2-dehydro-3-deoxyphosphooctonate aldolase (285 aa).

The protein belongs to the KdsA family.

The protein resides in the cytoplasm. It carries out the reaction D-arabinose 5-phosphate + phosphoenolpyruvate + H2O = 3-deoxy-alpha-D-manno-2-octulosonate-8-phosphate + phosphate. It participates in carbohydrate biosynthesis; 3-deoxy-D-manno-octulosonate biosynthesis; 3-deoxy-D-manno-octulosonate from D-ribulose 5-phosphate: step 2/3. The protein operates within bacterial outer membrane biogenesis; lipopolysaccharide biosynthesis. This Polaromonas naphthalenivorans (strain CJ2) protein is 2-dehydro-3-deoxyphosphooctonate aldolase.